A 236-amino-acid polypeptide reads, in one-letter code: Methylosome subunit pICln (236 aa).

The segment at 1 to 20 is disordered; the sequence is MSFLKSFPPPGPTEGLRHQQ. Serine 2 carries the post-translational modification N-acetylserine. A phosphoserine mark is found at serine 101, serine 143, serine 192, serine 194, serine 197, and serine 209. Phosphothreonine is present on threonine 222.

The protein belongs to the pICln (TC 1.A.47) family. In terms of assembly, component of the methylosome, a 20S complex containing at least PRMT5/SKB1, WDR77/MEP50 and CLNS1A/pICln. May mediate SNRPD1 and SNRPD3 methylation. Forms a 6S pICln-Sm complex composed of CLNS1A/pICln, SNRPD1, SNRPD2, SNRPE, SNRPF and SNRPG; ring-like structure where CLNS1A/pICln mimics additional Sm proteins and which is unable to assemble into the core snRNP. Interacts with LSM10 and LSM11. Widely distributed but expressed more abundantly in nonpigmented ciliary epithelial cells than in pigmented ones.

The protein localises to the cytoplasm. The protein resides in the cytosol. Its subcellular location is the nucleus. It is found in the cytoskeleton. Involved in both the assembly of spliceosomal snRNPs and the methylation of Sm proteins. Chaperone that regulates the assembly of spliceosomal U1, U2, U4 and U5 small nuclear ribonucleoproteins (snRNPs), the building blocks of the spliceosome, and thereby plays an important role in the splicing of cellular pre-mRNAs. Most spliceosomal snRNPs contain a common set of Sm proteins SNRPB, SNRPD1, SNRPD2, SNRPD3, SNRPE, SNRPF and SNRPG that assemble in a heptameric protein ring on the Sm site of the small nuclear RNA to form the core snRNP (Sm core). In the cytosol, the Sm proteins SNRPD1, SNRPD2, SNRPE, SNRPF and SNRPG are trapped in an inactive 6S pICln-Sm complex by the chaperone CLNS1A that controls the assembly of the core snRNP. Dissociation by the SMN complex of CLNS1A from the trapped Sm proteins and their transfer to an SMN-Sm complex triggers the assembly of core snRNPs and their transport to the nucleus. In Oryctolagus cuniculus (Rabbit), this protein is Methylosome subunit pICln (CLNS1A).